The following is a 157-amino-acid chain: uncharacterized protein (157 aa).

Residues 6 to 157 (HDELFQAIQQ…AFFNLWIKYM (152 aa)) form the HTH marR-type domain. The H-T-H motif DNA-binding region spans 66–89 (NSFLASRLHISKAAVSKAVHALLK).

Its subcellular location is the cytoplasm. This is an uncharacterized protein from Bacillus subtilis (strain 168).